Reading from the N-terminus, the 139-residue chain is Actin-depolymerizing factor (139 aa).

The ADF-H domain maps to 5-139; sequence SSGMAVDDEC…SMDIIKARAF (135 aa).

It belongs to the actin-binding proteins ADF family. Preferentially in mature anther.

In terms of biological role, actin-depolymerizing protein. Severs actin filaments (F-actin) and binds to actin monomers. The polypeptide is Actin-depolymerizing factor (Lilium longiflorum (Trumpet lily)).